Reading from the N-terminus, the 388-residue chain is MNLHEYQAKALFAEYGLPVSEGYACDTPQEAVEAAGHIGGDMWVVKCQVHAGGRGKAGGVKVTGDKEEIRAFAEHWLGKNLVTYQTDEKGQPVAKILVESCTDIANELYLGAVVDRATRRVVFMASTEGGVEIETVAEETPELIHKAIIDPLTGPQPYQARDLGFKLGLNPTQMKQFTKVFMGLATMFTDHDFALLEINPLVITTEGNIHCLDGKIGIDGNALFRQPKIRDMHDPSQDDAREAHAAKFELNYVALDGNVGCMVNGAGLAMGTMDIVNLHGGKPANFLDVGGGATKERVAEAFKIILSDANVKAVLVNIFGGIVRCDMIAEGIIGAVKEVGVEVPVVVRLEGTNADLGREVLANSGLDIIAAESLTDAAVKVVAAAEGK.

The ATP-grasp domain occupies 9–244; that stretch reads KALFAEYGLP…PSQDDAREAH (236 aa). ATP contacts are provided by residues lysine 46, 53 to 55, glutamate 99, threonine 102, and glutamate 107; that span reads GRG. Positions 199 and 213 each coordinate Mg(2+). Residues asparagine 264 and 321–323 contribute to the substrate site; that span reads GIV.

The protein belongs to the succinate/malate CoA ligase beta subunit family. As to quaternary structure, heterotetramer of two alpha and two beta subunits. Mg(2+) is required as a cofactor.

The enzyme catalyses succinate + ATP + CoA = succinyl-CoA + ADP + phosphate. It carries out the reaction GTP + succinate + CoA = succinyl-CoA + GDP + phosphate. The protein operates within carbohydrate metabolism; tricarboxylic acid cycle; succinate from succinyl-CoA (ligase route): step 1/1. Succinyl-CoA synthetase functions in the citric acid cycle (TCA), coupling the hydrolysis of succinyl-CoA to the synthesis of either ATP or GTP and thus represents the only step of substrate-level phosphorylation in the TCA. The beta subunit provides nucleotide specificity of the enzyme and binds the substrate succinate, while the binding sites for coenzyme A and phosphate are found in the alpha subunit. This chain is Succinate--CoA ligase [ADP-forming] subunit beta, found in Shewanella loihica (strain ATCC BAA-1088 / PV-4).